Reading from the N-terminus, the 168-residue chain is Fusion protein P6 (168 aa).

The next 4 membrane-spanning stretches (helical) occupy residues 29 to 49 (IWPL…AGFF), 52 to 72 (AGFT…TPTL), 94 to 114 (FQSL…ALIA), and 143 to 163 (ALPG…LWPS).

In terms of assembly, interacts with P3.

The protein localises to the virion membrane. Mediates the fusion with the host outer membrane during virus entry into the host cell. This chain is Fusion protein P6 (P6), found in Pseudomonas savastanoi pv. phaseolicola (Pseudomonas syringae pv. phaseolicola).